A 156-amino-acid chain; its full sequence is Small ribosomal subunit protein uS7 (156 aa).

The protein belongs to the universal ribosomal protein uS7 family. Part of the 30S ribosomal subunit. Contacts proteins S9 and S11.

In terms of biological role, one of the primary rRNA binding proteins, it binds directly to 16S rRNA where it nucleates assembly of the head domain of the 30S subunit. Is located at the subunit interface close to the decoding center, probably blocks exit of the E-site tRNA. This chain is Small ribosomal subunit protein uS7, found in Methylorubrum extorquens (strain CM4 / NCIMB 13688) (Methylobacterium extorquens).